The following is a 343-amino-acid chain: MTGEAVSGQDVSNPGKSSWRVTVLGGGAWGTALALAMLRAGHKVRLFARDPQTVAAIGQGQNPRYLPGIAIAPGIEATSDIAAALSGADCVLAVTPAQSLRATLAVAKDNMPDGIPLVLCAKGIERDTGALLSAIVEEILPRNPVAALSGPSFATDVARGLPTAVVVAARDEALAADLAARFSAQNLRCYSSDDLIGVEIGGALKNVFAIAAGAVTGAGLGASAQAAMVTRGFVELRRIGAAFGARPETLMGLSGLGDLLLTCSSAQSRNFAYGLTLGQGKALAGLPLAEGVPTAAIAARIAVERGIDAPIIAAVAAILDGAITISQAVTALMTRPLKTETND.

NADPH is bound by residues Trp29, Arg49, and Lys122. The sn-glycerol 3-phosphate site is built by Lys122, Gly150, and Ser152. Ala154 contributes to the NADPH binding site. Lys205, Asp258, Ser268, Arg269, and Asn270 together coordinate sn-glycerol 3-phosphate. The active-site Proton acceptor is Lys205. An NADPH-binding site is contributed by Arg269. Residues Leu288 and Glu290 each contribute to the NADPH site.

The protein belongs to the NAD-dependent glycerol-3-phosphate dehydrogenase family.

The protein resides in the cytoplasm. The catalysed reaction is sn-glycerol 3-phosphate + NAD(+) = dihydroxyacetone phosphate + NADH + H(+). The enzyme catalyses sn-glycerol 3-phosphate + NADP(+) = dihydroxyacetone phosphate + NADPH + H(+). The protein operates within membrane lipid metabolism; glycerophospholipid metabolism. Catalyzes the reduction of the glycolytic intermediate dihydroxyacetone phosphate (DHAP) to sn-glycerol 3-phosphate (G3P), the key precursor for phospholipid synthesis. This is Glycerol-3-phosphate dehydrogenase [NAD(P)+] from Mesorhizobium japonicum (strain LMG 29417 / CECT 9101 / MAFF 303099) (Mesorhizobium loti (strain MAFF 303099)).